The primary structure comprises 27 residues: Pregnancy-associated glycoprotein 62 (27 aa).

This sequence belongs to the peptidase A1 family. Glycosylated. Placenta.

The protein is Pregnancy-associated glycoprotein 62 (PAG62) of Capra hircus (Goat).